A 229-amino-acid polypeptide reads, in one-letter code: Orotidine 5'-phosphate decarboxylase (229 aa).

Substrate-binding positions include aspartate 9, lysine 31, 58 to 67 (DLKLFDIPNT), threonine 121, arginine 179, glutamine 188, glycine 208, and arginine 209. Catalysis depends on lysine 60, which acts as the Proton donor.

This sequence belongs to the OMP decarboxylase family. Type 1 subfamily. Homodimer.

The enzyme catalyses orotidine 5'-phosphate + H(+) = UMP + CO2. It functions in the pathway pyrimidine metabolism; UMP biosynthesis via de novo pathway; UMP from orotate: step 2/2. Functionally, catalyzes the decarboxylation of orotidine 5'-monophosphate (OMP) to uridine 5'-monophosphate (UMP). The protein is Orotidine 5'-phosphate decarboxylase of Lawsonia intracellularis (strain PHE/MN1-00).